Reading from the N-terminus, the 663-residue chain is Cytochrome bo(3) ubiquinol oxidase subunit 1 (663 aa).

Residues M1–I16 are Periplasmic-facing. A helical transmembrane segment spans residues V17 to I35. Over T36 to V52 the chain is Cytoplasmic. Residues D53–R80 form a helical membrane-spanning segment. Ubiquinone-8 contacts are provided by R71 and D75. Topologically, residues S81–P95 are periplasmic. The helical transmembrane segment at P96–G132 threads the bilayer. H98 provides a ligand contact to ubiquinone-8. Position 106 (H106) interacts with heme b. Over A133–A137 the chain is Cytoplasmic. A helical membrane pass occupies residues F138 to G161. At V162 to G184 the chain is on the periplasmic side. Residue W170 coordinates heme b. A helical transmembrane segment spans residues V185–M215. Residues R216 to K224 are Cytoplasmic-facing. The helical transmembrane segment at M225 to G260 threads the bilayer. Topologically, residues T261–G270 are periplasmic. The chain crosses the membrane as a helical span at residues N271–R307. Position 284 (H284) interacts with Cu(2+). The segment at residues H284 to Y288 is a cross-link (1'-histidyl-3'-tyrosine (His-Tyr)). Fe(II)-heme o is bound at residue Y288. Residues K308–F311 are Cytoplasmic-facing. Residues G312–L326 traverse the membrane as a helical segment. The Periplasmic segment spans residues S327–A340. Positions 333 and 334 each coordinate Cu(2+). Residues G341–T369 traverse the membrane as a helical segment. At M370–F377 the chain is on the cytoplasmic side. A helical transmembrane segment spans residues H378–V409. Over L410–N412 the chain is Periplasmic. The Fe(II)-heme o site is built by H411 and H419. Residues S413–G445 traverse the membrane as a helical segment. H421 lines the heme b pocket. Over F446–L448 the chain is Cytoplasmic. The chain crosses the membrane as a helical span at residues N449–M477. The Periplasmic segment spans residues G478–P489. Residues R481 and R482 each coordinate heme b. A helical transmembrane segment spans residues Q490 to R521. At D522–K587 the chain is on the cytoplasmic side. The helical transmembrane segment at N588 to M606 threads the bilayer. At I607–L613 the chain is on the periplasmic side. A helical membrane pass occupies residues A614–E632. The Cytoplasmic segment spans residues D633–N663.

It belongs to the heme-copper respiratory oxidase family. The cytochrome bo(3) ubiquinol oxidase complex is a heterooctamer of two A chains, two B chains, two C chains and two D chains. Cu(2+) serves as cofactor. Requires heme b as cofactor. Fe(II)-heme o is required as a cofactor.

It localises to the cell inner membrane. The catalysed reaction is 2 a ubiquinol + O2 + n H(+)(in) = 2 a ubiquinone + 2 H2O + n H(+)(out). Functionally, cytochrome bo(3) ubiquinol oxidase is the terminal enzyme in the aerobic respiratory chain of E.coli that predominates when cells are grown at high aeration. Catalyzes the four-electron reduction of O2 to water, using a ubiquinol as a membrane soluble electron donor for molecular oxygen reduction; ubiquinol-8 is the natural substrate for E.coli. Has proton pump activity across the membrane in addition to electron transfer, pumping 2 protons/electron and generating a proton motive force. All the redox centers of this enzyme complex are located within the largest subunit, subunit I. Protons are probably pumped via D- and K- channels found in this subunit. This chain is Cytochrome bo(3) ubiquinol oxidase subunit 1 (cyoB), found in Escherichia coli O157:H7.